A 68-amino-acid chain; its full sequence is Conotoxin Lt5.2 (68 aa).

An N-terminal signal peptide occupies residues 1–19 (MLCLPVFIILLLLASPAAP). The propeptide occupies 20–54 (KSLETRIQNDLIRAGLTDADLKTEKGFLSGLLNVA).

It belongs to the conotoxin T superfamily. Contains 2 disulfide bonds that can be either 'C1-C3, C2-C4' or 'C1-C4, C2-C3', since these disulfide connectivities have been observed for conotoxins with cysteine framework V (for examples, see AC P0DQQ7 and AC P81755). As to expression, expressed by the venom duct.

The protein localises to the secreted. The polypeptide is Conotoxin Lt5.2 (Conus litteratus (Lettered cone)).